Consider the following 400-residue polypeptide: Argininosuccinate synthase (400 aa).

ATP is bound by residues 10–18 (AYSGGVDTS) and alanine 38. Tyrosine 89 contributes to the L-citrulline binding site. Glycine 119 serves as a coordination point for ATP. L-aspartate-binding residues include threonine 121, asparagine 125, and aspartate 126. Asparagine 125 serves as a coordination point for L-citrulline. 5 residues coordinate L-citrulline: arginine 129, serine 177, serine 186, glutamate 262, and tyrosine 274.

The protein belongs to the argininosuccinate synthase family. Type 1 subfamily. As to quaternary structure, homotetramer.

It localises to the cytoplasm. The enzyme catalyses L-citrulline + L-aspartate + ATP = 2-(N(omega)-L-arginino)succinate + AMP + diphosphate + H(+). It functions in the pathway amino-acid biosynthesis; L-arginine biosynthesis; L-arginine from L-ornithine and carbamoyl phosphate: step 2/3. The sequence is that of Argininosuccinate synthase from Trichormus variabilis (strain ATCC 29413 / PCC 7937) (Anabaena variabilis).